The primary structure comprises 174 residues: Cathepsin B-like cysteine proteinase 3 (174 aa).

Cystine bridges form between cysteine 22–cysteine 55 and cysteine 30–cysteine 42. Catalysis depends on residues histidine 122 and asparagine 142.

It belongs to the peptidase C1 family.

Functionally, expression of the protease correlates with blood-feeding and suggests a role for the protease in blood digestion. The polypeptide is Cathepsin B-like cysteine proteinase 3 (CP-3) (Ostertagia ostertagi (Brown stomach worm)).